The chain runs to 325 residues: Biotin synthase (325 aa).

Positions 49–267 (TQVQISTLLS…IAAARISMPR (219 aa)) constitute a Radical SAM core domain. The [4Fe-4S] cluster site is built by Cys-64, Cys-68, and Cys-71. The [2Fe-2S] cluster site is built by Cys-108, Cys-139, Cys-199, and Arg-271.

The protein belongs to the radical SAM superfamily. Biotin synthase family. As to quaternary structure, homodimer. The cofactor is [4Fe-4S] cluster. It depends on [2Fe-2S] cluster as a cofactor.

It catalyses the reaction (4R,5S)-dethiobiotin + (sulfur carrier)-SH + 2 reduced [2Fe-2S]-[ferredoxin] + 2 S-adenosyl-L-methionine = (sulfur carrier)-H + biotin + 2 5'-deoxyadenosine + 2 L-methionine + 2 oxidized [2Fe-2S]-[ferredoxin]. It participates in cofactor biosynthesis; biotin biosynthesis; biotin from 7,8-diaminononanoate: step 2/2. Functionally, catalyzes the conversion of dethiobiotin (DTB) to biotin by the insertion of a sulfur atom into dethiobiotin via a radical-based mechanism. The polypeptide is Biotin synthase (Acidiphilium cryptum (strain JF-5)).